We begin with the raw amino-acid sequence, 419 residues long: Inward rectifier potassium channel 16 (419 aa).

Over 1–67 the chain is Cytoplasmic; sequence MSYYGSSYRI…MVDIFTTLVD (67 aa). A helical transmembrane segment spans residues 68–94; that stretch reads TKWRHMFVVFSLSYILSWLIFGSIFWL. Topologically, residues 95-117 are extracellular; that stretch reads IALHHGDLLSDPDITPCVDNVHS. The segment at residues 118–134 is an intramembrane region (helical; Pore-forming); that stretch reads FTAAFLFSLETQTTIGY. Residues 131–136 carry the Selectivity filter motif; that stretch reads TIGYGY. Over 135–143 the chain is Extracellular; it reads GYRCVTEEC. Residues 144-171 form a helical membrane-spanning segment; it reads SVAVLTVILQSILSCIINTFIIGAALAK. At 172 to 419 the chain is on the cytoplasmic side; it reads MATARKRAQT…LNRISMESQM (248 aa). Phosphoserine occurs at positions 358, 374, and 376.

It belongs to the inward rectifier-type potassium channel (TC 1.A.2.1) family. KCNJ16 subfamily. In terms of assembly, it forms heteromeric channels with Kir4.1/KCNJ10; this interaction is required for KCNJ16 localization to the basolateral membrane in kidney cells. As a heteromer with KCNJ10, may interact with MAGI1; this interaction may facilitate KCNJ10/KCNJ16 potassium channel expression at the basolateral membrane in kidney cells. May form heteromers with Kir2.1/KCNJ2. Can form heteromeric channels with Kir4.2/KCNJ15. In terms of tissue distribution, expressed in the brain, testis, liver, spleen, kidney, submaxillary gland and adrenals. In the kidney, expressed in the epithelial cells of both proximal and distal convoluted tubules, in the endothelial cells surrounding glomerular capillaries and in the flattened parietal layer of Bowman's capsule.

Its subcellular location is the membrane. It is found in the basolateral cell membrane. The catalysed reaction is K(+)(in) = K(+)(out). With respect to regulation, channel activity is strongly regulated by variations of cytosolic pH; channels are activated by alkaline and inhibited by acidic pH values. Activated by phosphatidylinositol 4,5 biphosphate (PtdIns(4,5)P2). Functionally, inward rectifier potassium channels are characterized by a greater tendency to allow potassium to flow into the cell rather than out of it. Their voltage dependence is regulated by the concentration of extracellular potassium; as external potassium is raised, the voltage range of the channel opening shifts to more positive voltages. The inward rectification is mainly due to the blockage of outward current by internal magnesium. KCNJ16 may be involved in the regulation of fluid and pH balance. In the kidney, together with KCNJ10, mediates basolateral K(+) recycling in distal tubules; this process is critical for Na(+) reabsorption at the tubules. The chain is Inward rectifier potassium channel 16 (Kcnj16) from Rattus norvegicus (Rat).